Reading from the N-terminus, the 576-residue chain is Apolipoprotein N-acyltransferase 1 (576 aa).

7 consecutive transmembrane segments (helical) span residues 15–35 (LILC…FSFF), 38–58 (GVFA…TSIW), 60–80 (AFLW…YWIP), 92–112 (FVSI…FFLF), 128–148 (YILL…FQIF), 168–188 (ICGV…FLIL), and 204–224 (IASL…IGYI). The CN hydrolase domain occupies 236–538 (LSVLMIQPDT…TGTRAFSIRL (303 aa)). The active-site Proton acceptor is the Glu-285. Residue Lys-355 is part of the active site. The active-site Nucleophile is the Cys-446. A helical transmembrane segment spans residues 549–569 (FGNSFLWIFCILILISRLIFV).

This sequence belongs to the CN hydrolase family. Apolipoprotein N-acyltransferase subfamily.

Its subcellular location is the cell inner membrane. The enzyme catalyses N-terminal S-1,2-diacyl-sn-glyceryl-L-cysteinyl-[lipoprotein] + a glycerophospholipid = N-acyl-S-1,2-diacyl-sn-glyceryl-L-cysteinyl-[lipoprotein] + a 2-acyl-sn-glycero-3-phospholipid + H(+). The protein operates within protein modification; lipoprotein biosynthesis (N-acyl transfer). In terms of biological role, catalyzes the phospholipid dependent N-acylation of the N-terminal cysteine of apolipoprotein, the last step in lipoprotein maturation. This Leptospira interrogans serogroup Icterohaemorrhagiae serovar Lai (strain 56601) protein is Apolipoprotein N-acyltransferase 1.